The primary structure comprises 188 residues: Trafficking protein particle complex subunit 5 (188 aa).

A Phosphoserine modification is found at Ser10.

The protein belongs to the TRAPP small subunits family. BET3 subfamily. Component of the multisubunit TRAPP (transport protein particle) complex, which includes at least TRAPPC2, TRAPPC2L, TRAPPC3, TRAPPC3L, TRAPPC4, TRAPPC5, TRAPPC8, TRAPPC9, TRAPPC10, TRAPPC11 and TRAPPC12.

It localises to the golgi apparatus. Its subcellular location is the cis-Golgi network. The protein resides in the endoplasmic reticulum. Functionally, may play a role in vesicular transport from endoplasmic reticulum to Golgi. This Bos taurus (Bovine) protein is Trafficking protein particle complex subunit 5 (TRAPPC5).